The sequence spans 183 residues: ATP-dependent protease subunit HslV (183 aa).

The active site involves T10. The Na(+) site is built by A164, C167, and T170.

Belongs to the peptidase T1B family. HslV subfamily. As to quaternary structure, a double ring-shaped homohexamer of HslV is capped on each side by a ring-shaped HslU homohexamer. The assembly of the HslU/HslV complex is dependent on binding of ATP.

It localises to the cytoplasm. It catalyses the reaction ATP-dependent cleavage of peptide bonds with broad specificity.. Its activity is regulated as follows. Allosterically activated by HslU binding. In terms of biological role, protease subunit of a proteasome-like degradation complex believed to be a general protein degrading machinery. The protein is ATP-dependent protease subunit HslV of Rhizorhabdus wittichii (strain DSM 6014 / CCUG 31198 / JCM 15750 / NBRC 105917 / EY 4224 / RW1) (Sphingomonas wittichii).